A 255-amino-acid polypeptide reads, in one-letter code: Menaquinone reductase, iron-sulfur cluster-binding subunit (255 aa).

3 consecutive 4Fe-4S ferredoxin-type domains span residues 11–41, 66–97, and 99–128; these read WGMV…PQPD, HDVA…KNEE, and GIVS…FNWF. 12 residues coordinate [4Fe-4S] cluster: C20, C23, C26, C30, C75, C78, C83, C87, C108, C111, C114, and C118. 4 residues coordinate [3Fe-4S] cluster: C155, C158, C188, and C192.

In terms of assembly, the Qrc complex is composed of four subunits: QrcA, QrcB, QrcC and QrcD. Can form a supercomplex with the [NiFe] hydrogenase HynA1 and the tetraheme Type I cytochrome c3 TpIc(3), its physiological electron donors. The cofactor is [4Fe-4S] cluster. [3Fe-4S] cluster serves as cofactor.

The protein localises to the periplasm. Functionally, component of the respiratory Qrc complex, that catalyzes the reduction of the menaquinone pool using electrons transferred from the reduced periplasmic cytochrome c3, and which is probably involved in sulfate respiration. Is likely essential for growth on H(2) or formate since the periplasmic hydrogenases and/or formate dehydrogenases act as primary electron donors for the Qrc complex. QrcC is an electron-transferring subunit; its cubane iron sulfur clusters form a pathway for electron transfer between the hemes of QrcA and the membrane quinone pool. The sequence is that of Menaquinone reductase, iron-sulfur cluster-binding subunit from Nitratidesulfovibrio vulgaris (strain ATCC 29579 / DSM 644 / CCUG 34227 / NCIMB 8303 / VKM B-1760 / Hildenborough) (Desulfovibrio vulgaris).